The primary structure comprises 100 residues: Urease subunit gamma (100 aa).

Belongs to the urease gamma subunit family. Heterotrimer of UreA (gamma), UreB (beta) and UreC (alpha) subunits. Three heterotrimers associate to form the active enzyme.

It localises to the cytoplasm. It catalyses the reaction urea + 2 H2O + H(+) = hydrogencarbonate + 2 NH4(+). It participates in nitrogen metabolism; urea degradation; CO(2) and NH(3) from urea (urease route): step 1/1. The sequence is that of Urease subunit gamma from Prochlorococcus marinus (strain MIT 9301).